A 318-amino-acid chain; its full sequence is Dehydrogenase/reductase SDR family member 7C-B (318 aa).

An N-terminal signal peptide occupies residues 1–32; that stretch reads MGMSDIMWLDVSWAWLVLTAVLLAAAVFYLYT. 49-73 provides a ligand contact to NAD(+); sequence LITDSLSTVGNECAKLFHAGGARLI. Ser186 serves as a coordination point for substrate. Residue Tyr199 is the Proton acceptor of the active site.

This sequence belongs to the short-chain dehydrogenases/reductases (SDR) family.

It is found in the secreted. Its function is as follows. Putative oxidoreductase. The protein is Dehydrogenase/reductase SDR family member 7C-B (dhrs7cb) of Danio rerio (Zebrafish).